A 504-amino-acid chain; its full sequence is Sucrose phosphorylase (504 aa).

Asp50 lines the substrate pocket. Sucrose-binding positions include His88, 190-192, Glu232, 289-290, 342-345, and Arg399; these read RLD, HD, and DLYQ. The Nucleophile role is filled by Asp192. Glu232 functions as the Proton donor in the catalytic mechanism.

This sequence belongs to the glycosyl hydrolase 13 family. Sucrose phosphorylase subfamily. In terms of assembly, homodimer.

It carries out the reaction sucrose + phosphate = D-fructose + alpha-D-glucose 1-phosphate. In terms of biological role, catalyzes the reversible phosphorolysis of sucrose into alpha-D-glucose 1-phosphate (Glc1P) and D-fructose. Is involved in sucrose degradation. Also displays transglucosylation activity in vitro, by transferring the glucosyl moiety of Glc1P to a broad range of monomeric sugars, such as D- and L-arabinose, D- and L-arabitol, and xylitol. The protein is Sucrose phosphorylase of Bifidobacterium adolescentis (strain ATCC 15703 / DSM 20083 / NCTC 11814 / E194a).